The following is a 244-amino-acid chain: Kallikrein-6 (244 aa).

Residues 1–16 (MKKLMVVLSLIAAAWA) form the signal peptide. The propeptide at 17 to 21 (EEQNK) is activation peptide. Residues 22 to 242 (LVHGGPCDKT…YTNWIQKTIQ (221 aa)) enclose the Peptidase S1 domain. Disulfide bonds link Cys-28-Cys-157, Cys-47-Cys-63, Cys-131-Cys-231, Cys-138-Cys-203, Cys-168-Cys-182, and Cys-193-Cys-218. Catalysis depends on charge relay system residues His-62 and Asp-106. Asn-134 carries an N-linked (GlcNAc...) asparagine glycan. The active-site Charge relay system is Ser-197.

Inactivated by autolytic cleavage after Arg-80. In fluids, highest levels found in milk of lactating women followed by cerebrospinal fluid, nipple aspirate fluid and breast cyst fluid. Also found in serum, seminal plasma and some amniotic fluids and breast tumor cytosolic extracts. Not detected in urine. At the tissue level, highest concentrations found in glandular tissues such as salivary glands followed by lung, colon, fallopian tube, placenta, breast, pituitary and kidney. Not detected in skin, spleen, bone, thyroid, heart, ureter, liver, muscle, endometrium, testis, pancreas, seminal vesicle, ovary, adrenals and prostate. In brain, detected in gray matter neurons (at protein level). Colocalizes with pathological inclusions such as Lewy bodies and glial cytoplasmic inclusions. Overexpressed in primary breast tumors but not expressed in metastatic tumors.

The protein localises to the secreted. Its subcellular location is the nucleus. The protein resides in the nucleolus. It is found in the cytoplasm. It localises to the mitochondrion. The protein localises to the microsome. With respect to regulation, inhibited by a range of serine protease inhibitors including soybean trypsin inhibitor, benzamidine and serpins. Activated by a range of glycosaminoglycans including chondroitin sulfate, dermatan sulfate, heparan sulfate and heparin. Serine protease which exhibits a preference for Arg over Lys in the substrate P1 position and for Ser or Pro in the P2 position. Shows activity against amyloid precursor protein, myelin basic protein, gelatin, casein and extracellular matrix proteins such as fibronectin, laminin, vitronectin and collagen. Degrades alpha-synuclein and prevents its polymerization, indicating that it may be involved in the pathogenesis of Parkinson disease and other synucleinopathies. May be involved in regulation of axon outgrowth following spinal cord injury. Tumor cells treated with a neutralizing KLK6 antibody migrate less than control cells, suggesting a role in invasion and metastasis. In Homo sapiens (Human), this protein is Kallikrein-6 (KLK6).